A 283-amino-acid polypeptide reads, in one-letter code: Pantothenate synthetase (283 aa).

30 to 37 contributes to the ATP binding site; sequence MGNLHDGH. Residue H37 is the Proton donor of the active site. Q61 is a binding site for (R)-pantoate. Q61 is a beta-alanine binding site. 149 to 152 serves as a coordination point for ATP; sequence GEKD. Q155 provides a ligand contact to (R)-pantoate. 186-189 is a binding site for ATP; it reads LSSR.

This sequence belongs to the pantothenate synthetase family. In terms of assembly, homodimer.

The protein localises to the cytoplasm. The catalysed reaction is (R)-pantoate + beta-alanine + ATP = (R)-pantothenate + AMP + diphosphate + H(+). It functions in the pathway cofactor biosynthesis; (R)-pantothenate biosynthesis; (R)-pantothenate from (R)-pantoate and beta-alanine: step 1/1. Catalyzes the condensation of pantoate with beta-alanine in an ATP-dependent reaction via a pantoyl-adenylate intermediate. The protein is Pantothenate synthetase of Escherichia coli O6:H1 (strain CFT073 / ATCC 700928 / UPEC).